The chain runs to 146 residues: Putative pre-16S rRNA nuclease (146 aa).

It belongs to the YqgF nuclease family.

It is found in the cytoplasm. Its function is as follows. Could be a nuclease involved in processing of the 5'-end of pre-16S rRNA. This is Putative pre-16S rRNA nuclease from Burkholderia thailandensis (strain ATCC 700388 / DSM 13276 / CCUG 48851 / CIP 106301 / E264).